A 204-amino-acid chain; its full sequence is Sperm acrosome developmental regulator (204 aa).

Ser-65 carries the phosphoserine modification. A compositionally biased stretch (basic residues) spans 172 to 184 (RRQERRRRHHLRA). Positions 172 to 204 (RRQERRRRHHLRAHMGPQPDPAQGLKQDARSPL) are disordered.

The protein localises to the cytoplasmic vesicle. It localises to the secretory vesicle. Its subcellular location is the acrosome. In terms of biological role, may play an important role in acrosome formation and nucleus shaping during spermiogenesis. This chain is Sperm acrosome developmental regulator (SPACDR), found in Bos taurus (Bovine).